We begin with the raw amino-acid sequence, 388 residues long: uncharacterized protein (388 aa).

11 consecutive transmembrane segments (helical) span residues 18–38 (AAMF…PLYV), 42–62 (LHLS…ATLL), 89–111 (ASGL…WAIL), 116–136 (VLLG…GMWL), 145–165 (VISW…PLGL), 171–191 (AGLA…SGVI), 219–239 (TGLV…ALWF), 248–268 (GFAM…CAKF), 287–307 (TGLA…GAAI), 341–361 (AFQD…TPFI), and 365–385 (QVFL…HLLL).

The protein belongs to the major facilitator superfamily. YfcJ family.

It is found in the cell inner membrane. This is an uncharacterized protein from Salmonella typhimurium (strain LT2 / SGSC1412 / ATCC 700720).